A 225-amino-acid chain; its full sequence is MQFKNVALAASVAALSATASAEGYTPGEPWSTLTPTGSISCGAAEYTTTFGIAVQAITSSKAKRDVISQIGDGQVQATSAAATDSQVQASSTATPTSSEKISSSASKTSSTNATSSSCATPSLKDSSCKNSGTLELTLKDGVLTDAKGRIGSIVANRQFQFDGPPPQAGAIYAAGWSITEDGYLALGDSDVFYQCLSGNFYNLYDQNVAEQCSAIHLEAVSLVDC.

The signal sequence occupies residues 1–21 (MQFKNVALAASVAALSATASA). The propeptide occupies 22 to 64 (EGYTPGEPWSTLTPTGSISCGAAEYTTTFGIAVQAITSSKAKR). The PIR1/2/3 repeat unit spans residues 65-82 (DVISQIGDGQVQATSAAA). A glycan (O-linked (Man) serine) is linked at Ser-68. An O-linked (Man) threonine glycan is attached at Thr-78. A compositionally biased stretch (polar residues) spans 78 to 92 (TSAAATDSQVQASST). Positions 78–128 (TSAAATDSQVQASSTATPTSSEKISSSASKTSSTNATSSSCATPSLKDSSC) are disordered. Residues 93 to 122 (ATPTSSEKISSSASKTSSTNATSSSCATPS) show a composition bias toward low complexity. Ser-102, Ser-103, Ser-104, and Ser-106 each carry an O-linked (Man) serine glycan. O-linked (Man) threonine glycosylation is present at Thr-108. An O-linked (Man) serine glycan is attached at Ser-109. 2 O-linked (Man) threonine glycosylation sites follow: Thr-111 and Thr-114. Residues Ser-115 and Ser-116 are each glycosylated (O-linked (Man) serine).

This sequence belongs to the PIR protein family. Covalently linked to beta-1,3-glucan of the inner cell wall layer via an alkali-sensitive ester linkage between the gamma-carboxyl group of glutamic acid, arising from Gln-74 within the PIR1/2/3 repeat, and hydroxyl groups of glucoses of beta-1,3-glucan chains. Post-translationally, extensively O-mannosylated.

It is found in the secreted. Its subcellular location is the cell wall. Component of the outer cell wall layer. Required for stability of the cell wall and for optimal growth. Required for resistance against several antifungal and cell wall-perturbing agents. This Saccharomyces cerevisiae (strain AWRI1631) (Baker's yeast) protein is Cell wall mannoprotein CIS3 (CIS3).